Here is a 437-residue protein sequence, read N- to C-terminus: 3-ketoacyl-CoA thiolase (437 aa).

Residue Cys-99 is the Acyl-thioester intermediate of the active site. Active-site proton acceptor residues include His-392 and Cys-422.

Belongs to the thiolase-like superfamily. Thiolase family. In terms of assembly, heterotetramer of two alpha chains (FadJ) and two beta chains (FadI).

The protein resides in the cytoplasm. It catalyses the reaction an acyl-CoA + acetyl-CoA = a 3-oxoacyl-CoA + CoA. It participates in lipid metabolism; fatty acid beta-oxidation. In terms of biological role, catalyzes the final step of fatty acid oxidation in which acetyl-CoA is released and the CoA ester of a fatty acid two carbons shorter is formed. In Pectobacterium carotovorum subsp. carotovorum (strain PC1), this protein is 3-ketoacyl-CoA thiolase.